Reading from the N-terminus, the 359-residue chain is tRNA N6-adenosine threonylcarbamoyltransferase (359 aa).

Fe cation contacts are provided by H115 and H119. Substrate is bound by residues 137 to 141, D170, G183, and N283; that span reads LVSGG. Fe cation is bound at residue D311. The disordered stretch occupies residues 328 to 359; sequence APDSLDIAPRSRWPLDEKSAPVFGTGRRGAKA.

Belongs to the KAE1 / TsaD family. Requires Fe(2+) as cofactor.

The protein localises to the cytoplasm. It carries out the reaction L-threonylcarbamoyladenylate + adenosine(37) in tRNA = N(6)-L-threonylcarbamoyladenosine(37) in tRNA + AMP + H(+). Its function is as follows. Required for the formation of a threonylcarbamoyl group on adenosine at position 37 (t(6)A37) in tRNAs that read codons beginning with adenine. Is involved in the transfer of the threonylcarbamoyl moiety of threonylcarbamoyl-AMP (TC-AMP) to the N6 group of A37, together with TsaE and TsaB. TsaD likely plays a direct catalytic role in this reaction. The polypeptide is tRNA N6-adenosine threonylcarbamoyltransferase (Brucella melitensis biotype 2 (strain ATCC 23457)).